The chain runs to 509 residues: DNA primase DnaG (509 aa).

One can recognise a Toprim domain in the interval 167-253; sequence DAIVVVEGRA…CVEDLARHEV (87 aa). Mg(2+) contacts are provided by E173, D215, and D217. The segment at 267–411 is disordered; the sequence is KQAASDDADP…ASTDEQPKTL (145 aa). Composition is skewed to low complexity over residues 313 to 331 and 383 to 402; these read PVSS…ETAA and ESTA…AAGA.

The protein belongs to the archaeal DnaG primase family. In terms of assembly, forms a ternary complex with MCM helicase and DNA. Requires Mg(2+) as cofactor.

The enzyme catalyses ssDNA + n NTP = ssDNA/pppN(pN)n-1 hybrid + (n-1) diphosphate.. Its function is as follows. RNA polymerase that catalyzes the synthesis of short RNA molecules used as primers for DNA polymerase during DNA replication. The sequence is that of DNA primase DnaG from Natronomonas pharaonis (strain ATCC 35678 / DSM 2160 / CIP 103997 / JCM 8858 / NBRC 14720 / NCIMB 2260 / Gabara) (Halobacterium pharaonis).